Consider the following 49-residue polypeptide: Large ribosomal subunit protein bL33B (49 aa).

The protein belongs to the bacterial ribosomal protein bL33 family.

This Latilactobacillus sakei subsp. sakei (strain 23K) (Lactobacillus sakei subsp. sakei) protein is Large ribosomal subunit protein bL33B.